The primary structure comprises 317 residues: Glutathione synthetase (317 aa).

One can recognise an ATP-grasp domain in the interval 124–310; that stretch reads EKLFTAWFPE…ITGKLMDAIE (187 aa). 150 to 207 contacts ATP; sequence FRQEHGDIILKPLDGMGGASIFRVKENDPNVSVIIETLTNHGQNYAMAQTFVPDISNG. 2 residues coordinate Mg(2+): E281 and N283.

It belongs to the prokaryotic GSH synthase family. Mg(2+) is required as a cofactor. Mn(2+) serves as cofactor.

It carries out the reaction gamma-L-glutamyl-L-cysteine + glycine + ATP = glutathione + ADP + phosphate + H(+). Its pathway is sulfur metabolism; glutathione biosynthesis; glutathione from L-cysteine and L-glutamate: step 2/2. The chain is Glutathione synthetase from Vibrio vulnificus (strain CMCP6).